A 142-amino-acid chain; its full sequence is Cytidine deaminase (142 aa).

The 131-residue stretch at 9–139 folds into the CMP/dCMP-type deaminase domain; it reads RQLEALKRAA…ELLPMAFGPS (131 aa). 50 to 52 lines the substrate pocket; the sequence is NVE. Position 61 (C61) interacts with Zn(2+). E63 acts as the Proton donor in catalysis. 2 residues coordinate Zn(2+): C96 and C99.

The protein belongs to the cytidine and deoxycytidylate deaminase family. Homodimer. Requires Zn(2+) as cofactor.

The enzyme catalyses cytidine + H2O + H(+) = uridine + NH4(+). It catalyses the reaction 2'-deoxycytidine + H2O + H(+) = 2'-deoxyuridine + NH4(+). Functionally, this enzyme scavenges exogenous and endogenous cytidine and 2'-deoxycytidine for UMP synthesis. The sequence is that of Cytidine deaminase (CDD1) from Saccharomyces cerevisiae (strain ATCC 204508 / S288c) (Baker's yeast).